Reading from the N-terminus, the 756-residue chain is Receptor-like protein 3 (756 aa).

An N-terminal signal peptide occupies residues 1–50 (MTNEGRFKAKGFVRTSSTTRPIQALSFHMIGILLQCVLFISVLSIAVSEA). Positions 51-88 (LCNSQDRESLLWFSGNVSSSVSPLNWNPSIDCCSWEGI) are N-cap. Topologically, residues 51 to 725 (LCNSQDRESL…ADTEDEEELK (675 aa)) are extracellular. N66 carries an N-linked (GlcNAc...) asparagine glycan. 18 LRR repeats span residues 95–119 (DSHITAISLPFRALYGKLPLSVLRL), 120–143 (HHLSQLNLSHNRLSGHLPSGFLSA), 145–169 (DQLKVLDLSYNSLDGELPVEQTFRN), 174–199 (CFPIRIVDLSSNFLQGEILPSSIFMQ), 201–225 (TFDLISFNVSKNSFTGSIPSFMCKS), 226–250 (SPQLSKLDFSYNDFTGNIPQGLGRC), 252–274 (KLSVLQAGFNNISGEIPSDIYNL), 275–298 (SELEQLFLPVNHLSGKINDDITHL), 299–322 (TKLKSLELYSNHLGGEIPMDIGQL), 323–346 (SRLQSLQLHINNITGTVPPSLANC), 348–370 (NLVKLNLRLNRLEGTLSELDFSR), 371–395 (FQSLSILDLGNNSFSGDFPWRVHSC), 397–419 (SLSAMRFASNKLTGQISPHVLEL), 420–443 (ESLSILSLSDNKLMNITGALGILQ), 445–471 (CRNLSTLLIGKNFYNETFPSDKDLISS), 474–498 (FPNLQIFASGGSGLRGEIPAWLIKL), 499–521 (KSLAVIDLSHNQLVGSIPGWLGT), and 522–546 (FPHLFYIDLSENLLSGELPKDLFQL). Residues N126 and N169 are each glycosylated (N-linked (GlcNAc...) asparagine). N208 carries an N-linked (GlcNAc...) asparagine glycan. Residues N262 and N273 are each glycosylated (N-linked (GlcNAc...) asparagine). N334 and N345 each carry an N-linked (GlcNAc...) asparagine glycan. N381 is a glycosylation site (N-linked (GlcNAc...) asparagine). N-linked (GlcNAc...) asparagine glycans are attached at residues N434, N447, and N459. One copy of the LRR 19; degenerate repeat lies at 548–569 (ALMSQKAYDATERNYLKLPVFV). 4 LRR repeats span residues 570-593 (SPNNVTTHQQYNQLFSLPPGIYIR), 608-631 (LKVLHVLELSHNYLSGIIPHELSK), 632-656 (LTSLERLDLSNNHLSGRIPWSLTSL), and 658-681 (YMSYFNVVNNSLDGPIPTGSQFDT). N573 carries N-linked (GlcNAc...) asparagine glycosylation. N666 is a glycosylation site (N-linked (GlcNAc...) asparagine). The segment at 699–725 (LTSCKASTKLPATTTNKADTEDEEELK) is C-cap/acidic domain. A helical membrane pass occupies residues 726 to 746 (FIFILGVATGFFVSYCFYWCF). The Cytoplasmic segment spans residues 747–756 (FARLDAFISK).

This sequence belongs to the RLP family. Expressed at very low levels in the shoot apex.

It localises to the cell membrane. Its function is as follows. Involved in the perception of CLV3 and CLV3-like peptides, that act as extracellular signals regulating meristems maintenance. Contributes, with WAKL22/RFO1, to resistance to F.oxysporum (f.) matthioli in cv. Columbia relative to cv. Ty-0. In Arabidopsis thaliana (Mouse-ear cress), this protein is Receptor-like protein 3.